A 244-amino-acid chain; its full sequence is Tegument protein UL51 (244 aa).

C9 is lipidated: S-palmitoyl cysteine; by host. A disordered region spans residues 178-244 (GVTEAPSLGH…SRAAPCVLGQ (67 aa)). Low complexity predominate over residues 221–244 (PRPTASPTAPRPGPSRAAPCVLGQ).

The protein belongs to the herpesviridae UL51 family. In terms of assembly, oligomerizes. Interacts with UL7; this interaction mediates UL7 incorporation to virions. Interacts with UL14. In terms of processing, phosphorylated. Palmitoylation is necessary for Golgi localization.

The protein resides in the virion tegument. It localises to the host cytoplasm. It is found in the host Golgi apparatus. Its function is as follows. Plays several roles during the time course of infection, including egress of virus particles from the perinuclear space and secondary envelopment of cytoplasmic capsids that bud into specific trans-Golgi network (TGN)-derived membranes. Plays also an essential role in the maintenance of host cytoplasmic viral assembly center (cVAC) morphology in primary host neuronal cells. This Homo sapiens (Human) protein is Tegument protein UL51.